Consider the following 316-residue polypeptide: HPr kinase/phosphorylase (316 aa).

Residues His-143 and Lys-164 contribute to the active site. Position 158–165 (158–165 (GEAGSGKS)) interacts with ATP. Ser-165 is a binding site for Mg(2+). The active-site Proton acceptor; for phosphorylation activity. Proton donor; for dephosphorylation activity is the Asp-182. Positions 206 to 215 (LEVRGLGVLN) are important for the catalytic mechanism of both phosphorylation and dephosphorylation. Glu-207 provides a ligand contact to Mg(2+). The active site involves Arg-251. The tract at residues 272 to 277 (PVMPGR) is important for the catalytic mechanism of dephosphorylation.

Belongs to the HPrK/P family. As to quaternary structure, homohexamer. Mg(2+) is required as a cofactor.

The enzyme catalyses [HPr protein]-L-serine + ATP = [HPr protein]-O-phospho-L-serine + ADP + H(+). The catalysed reaction is [HPr protein]-O-phospho-L-serine + phosphate + H(+) = [HPr protein]-L-serine + diphosphate. In terms of biological role, catalyzes the ATP- as well as the pyrophosphate-dependent phosphorylation of a specific serine residue in HPr, a phosphocarrier protein of the phosphoenolpyruvate-dependent sugar phosphotransferase system (PTS). HprK/P also catalyzes the pyrophosphate-producing, inorganic phosphate-dependent dephosphorylation (phosphorolysis) of seryl-phosphorylated HPr (P-Ser-HPr). The chain is HPr kinase/phosphorylase from Stenotrophomonas maltophilia (strain R551-3).